Consider the following 143-residue polypeptide: Alpha-S2-casein-like B (143 aa).

The N-terminal stretch at 1–15 is a signal peptide; the sequence is MKFIILTCLLAVALA.

Belongs to the alpha-casein family. As to expression, mammary gland specific. Secreted in milk.

The protein resides in the secreted. In terms of biological role, important role in the capacity of milk to transport calcium phosphate. The chain is Alpha-S2-casein-like B (Csn1s2b) from Mus musculus (Mouse).